The following is a 661-amino-acid chain: Solute carrier organic anion transporter family member 1A4 (661 aa).

Topologically, residues 1-20 are cytoplasmic; it reads MGKSEKRVATHGVRCFAKIK. Residues 21–40 form a helical membrane-spanning segment; the sequence is MFLLALTCAYVSKSLSGTYM. At 41 to 59 the chain is on the extracellular side; the sequence is NSMLTQIERQFGIPTSIVG. The helical transmembrane segment at 60-80 threads the bilayer; sequence LINGSFEIGNLLLIIFVSYFG. Over 81–86 the chain is Cytoplasmic; the sequence is TKLHRP. A helical transmembrane segment spans residues 87–111; the sequence is IMIGVGCAVMGLGCFLISLPHFLMG. At 112–154 the chain is on the extracellular side; it reads QYEYETILPTSNVSSNSFFCVENRSQTLNPTQDPSECVKEMKS. N-linked (GlcNAc...) asparagine glycans are attached at residues Asn123 and Asn134. A helical transmembrane segment spans residues 155 to 183; that stretch reads LMWIYVLVGNIIRGIGETPIMPLGISYIE. Topologically, residues 184-202 are cytoplasmic; it reads DFAKSENSPLYIGILETGM. The helical transmembrane segment at 203–223 threads the bilayer; the sequence is TIGPLIGLLLASSCANIYVDI. Over 224 to 241 the chain is Extracellular; that stretch reads ESVNTDDLTITPTDTRWV. Residues 242 to 266 form a helical membrane-spanning segment; the sequence is GAWWIGFLVCAGVNILTSFPFFFFP. The Cytoplasmic portion of the chain corresponds to 267-310; the sequence is KTLPKEGLQENVDGTENAKEKKHRKKAKEEKRGITKDFFVFMKS. A helical transmembrane segment spans residues 311–332; sequence LSCNPIYMLFILISVLQFNAFI. Residues 333-352 lie on the Extracellular side of the membrane; that stretch reads NSFTFMPKYLEQQYGKSTAE. A helical transmembrane segment spans residues 353–376; sequence VVFLMGLYMLPPICLGYLIGGLIM. At 377–380 the chain is on the cytoplasmic side; it reads KKFK. A helical transmembrane segment spans residues 381 to 404; that stretch reads VTVKKAAHLAFWLCLSEYLLSFLS. The Extracellular portion of the chain corresponds to 405-512; that stretch reads YVMTCDNFPV…PDCANKLQYF (108 aa). The Kazal-like domain occupies 432–487; that stretch reads NKVLADCNTRCNCSTNTWDPVCGDNGLAYMSACLAGCEKSVGTGTNMVFQNCSCIQ. 3 disulfide bridges follow: Cys438-Cys468, Cys444-Cys464, and Cys453-Cys485. Asn443 is a glycosylation site (N-linked (GlcNAc...) asparagine). Asn482 and Asn491 each carry an N-linked (GlcNAc...) asparagine glycan. Residues 513–535 form a helical membrane-spanning segment; the sequence is LIIAIFGCFIYSLAGIPGYMVLL. The Cytoplasmic portion of the chain corresponds to 536 to 544; that stretch reads RCIKSEEKS. A helical transmembrane segment spans residues 545 to 570; that stretch reads LGVGLHAFCIRILAGIPAPIYFGALI. At 571–604 the chain is on the extracellular side; it reads DRTCLHWGTLKCGEPGACRMYDINSFRRLYLGLP. A helical transmembrane segment spans residues 605 to 622; that stretch reads AALRGASFVPAFFILRLT. Topologically, residues 623-661 are cytoplasmic; it reads RTFQFPGDIESSKTDHAEMKLTLKESECTEVLRSKVTED. A phosphoserine mark is found at Ser633 and Ser634.

Belongs to the organo anion transporter (TC 2.A.60) family. In terms of tissue distribution, highly expressed in brain, liver, and kidney but not expressed in heart, spleen, lung, skeletal muscle, and testis.

It localises to the cell membrane. The enzyme catalyses estrone 3-sulfate(out) = estrone 3-sulfate(in). It carries out the reaction taurocholate(out) = taurocholate(in). The catalysed reaction is prostaglandin E2(out) = prostaglandin E2(in). It catalyses the reaction L-thyroxine(out) = L-thyroxine(in). In terms of biological role, mediates the Na(+)-independent transport of organic anions such as taurocholate, cholate, 17-beta-glucuronosyl estradiol, prostaglandin E2, estrone 3-sulfate, L-thyroxine (T4), the cardiac glycosides ouabain and digoxin and thyroid hormones. May play an especially important role in the brain accumulation and toxicity of digoxin and in the hepatobiliary and renal excretion of cardiac glycosides. Shows a pH-sensitive substrate specificity which may be ascribed to the protonation state of the binding site and leads to a stimulation of substrate transport in an acidic microenvironment. Hydrogencarbonate/HCO3(-) acts as the probable counteranion that exchanges for organic anions. The protein is Solute carrier organic anion transporter family member 1A4 (Slco1a4) of Rattus norvegicus (Rat).